An 864-amino-acid chain; its full sequence is Xylosyltransferase 2 (864 aa).

At 1–15 (MVASARVQKLVRRYK) the chain is on the cytoplasmic side. A helical; Signal-anchor for type II membrane protein membrane pass occupies residues 16-36 (LAIATALAILLLQGLVVWSFS). The Lumenal segment spans residues 37–864 (GLEEDEPGEK…GPVKADGRLR (828 aa)). Disordered stretches follow at residues 39-123 (EEDE…RQNL) and 136-158 (AGFP…DNSF). Positions 53–65 (RPLDPGEGSKDTD) are enriched in basic and acidic residues. Over residues 73–82 (SAGRRHGRWR) the composition is skewed to basic residues. A glycan (N-linked (GlcNAc...) asparagine) is linked at asparagine 122. Cystine bridges form between cysteine 162–cysteine 190, cysteine 206–cysteine 448, cysteine 467–cysteine 480, and cysteine 469–cysteine 478. Residues valine 239, aspartate 267, and 296–298 (TIW) each bind UDP-alpha-D-xylose. N-linked (GlcNAc...) asparagine glycosylation is present at asparagine 327. 400–401 (DW) provides a ligand contact to UDP-alpha-D-xylose. Residues serine 481 and 504–505 (RK) contribute to the UDP-alpha-D-xylose site. 2 cysteine pairs are disulfide-bonded: cysteine 580-cysteine 832 and cysteine 825-cysteine 838. Asparagine 682 carries N-linked (GlcNAc...) asparagine glycosylation.

Belongs to the glycosyltransferase 14 family. XylT subfamily. Monomer. The cofactor is Mg(2+). Mn(2+) serves as cofactor. Post-translationally, contains disulfide bonds.

Its subcellular location is the golgi apparatus membrane. The protein localises to the secreted. The catalysed reaction is UDP-alpha-D-xylose + L-seryl-[protein] = 3-O-(beta-D-xylosyl)-L-seryl-[protein] + UDP + H(+). It functions in the pathway glycan metabolism; chondroitin sulfate biosynthesis. It participates in glycan metabolism; heparan sulfate biosynthesis. Catalyzes the first step in the biosynthesis of chondroitin sulfate, heparan sulfate and dermatan sulfate proteoglycans, such as DCN. Transfers D-xylose from UDP-D-xylose to specific serine residues of the core protein. The protein is Xylosyltransferase 2 (Xylt2) of Rattus norvegicus (Rat).